The following is a 337-amino-acid chain: MDDLKSIIGKVATGAPLSREQAASAFDSMMSGEATPSQMGALLMALRVRGETVEEITGAVSVMRAKMLRVDAPANAVDIVGTGGDGSGSVNVSTCASFIVAGAGVPVAKHGNRALSSRSGAADVLAALGVKIDLKPDQVGRCIREAGIGFMFAPAHHPAMKNVGPTRVELATRTIFNLLGPLSNPAGVKRQMVGVFSRQWVEPLAQVLKNLGSGAAWVVHGSDGLDEITLTGPTFVAALENGHIRTFEISPEEAGLGLCDSEGLKGGDAAANAVALQSVLDGLPSPYRDVALLNAAAALVVAGRAKSLKEGVAIGKDSLDSGAAAGRLKQLIAVSNS.

Residues Gly81, 84 to 85, Ser89, 91 to 94, 109 to 117, and Ala121 each bind 5-phospho-alpha-D-ribose 1-diphosphate; these read GD, NVST, and KHGNRALSS. Gly81 is an anthranilate binding site. Residue Ser93 participates in Mg(2+) binding. Asn112 is an anthranilate binding site. Arg167 contributes to the anthranilate binding site. Residues Asp226 and Glu227 each contribute to the Mg(2+) site.

The protein belongs to the anthranilate phosphoribosyltransferase family. Homodimer. The cofactor is Mg(2+).

The catalysed reaction is N-(5-phospho-beta-D-ribosyl)anthranilate + diphosphate = 5-phospho-alpha-D-ribose 1-diphosphate + anthranilate. It participates in amino-acid biosynthesis; L-tryptophan biosynthesis; L-tryptophan from chorismate: step 2/5. Its function is as follows. Catalyzes the transfer of the phosphoribosyl group of 5-phosphorylribose-1-pyrophosphate (PRPP) to anthranilate to yield N-(5'-phosphoribosyl)-anthranilate (PRA). This Bradyrhizobium sp. (strain ORS 278) protein is Anthranilate phosphoribosyltransferase.